A 377-amino-acid polypeptide reads, in one-letter code: Floricaula/leafy homolog (377 aa).

The span at 116-126 shows a compositional bias: basic and acidic residues; the sequence is RRRLDEEDPRR. The segment at 116-190 is disordered; the sequence is RRRLDEEDPR…RKKGQRKVVD (75 aa). Positions 131-141 are enriched in polar residues; the sequence is SGDNNTNTLDA. 3 DNA-binding regions span residues 206–210, 275–282, and 346–349; these read REHPF, NKPKMRHY, and YVPT.

Belongs to the FLO/LFY family. In terms of tissue distribution, in developing inflorescences, leaf primordia and very young leaves.

It is found in the nucleus. Its function is as follows. Probable transcription factor. This chain is Floricaula/leafy homolog (FL), found in Populus trichocarpa (Western balsam poplar).